A 141-amino-acid chain; its full sequence is Nucleoside diphosphate kinase (141 aa).

Residues lysine 11, phenylalanine 59, arginine 87, threonine 93, arginine 104, and asparagine 114 each coordinate ATP. Histidine 117 serves as the catalytic Pros-phosphohistidine intermediate.

The protein belongs to the NDK family. In terms of assembly, homotetramer. The cofactor is Mg(2+).

The protein resides in the cytoplasm. It carries out the reaction a 2'-deoxyribonucleoside 5'-diphosphate + ATP = a 2'-deoxyribonucleoside 5'-triphosphate + ADP. The catalysed reaction is a ribonucleoside 5'-diphosphate + ATP = a ribonucleoside 5'-triphosphate + ADP. Its function is as follows. Major role in the synthesis of nucleoside triphosphates other than ATP. The ATP gamma phosphate is transferred to the NDP beta phosphate via a ping-pong mechanism, using a phosphorylated active-site intermediate. This Xanthomonas axonopodis pv. citri (strain 306) protein is Nucleoside diphosphate kinase.